Here is a 736-residue protein sequence, read N- to C-terminus: Prolyl 3-hydroxylase 1 (736 aa).

An N-terminal signal peptide occupies residues 1-22; sequence MAVRALKLLTTLLAVVAAASQA. TPR repeat units follow at residues 35–68, 143–176, 205–238, and 301–334; these read PDLL…RAAL, RSPY…NPEH, HMQE…YFVA, and PSHY…FPND. The N-linked (GlcNAc...) asparagine glycan is linked to N316. Positions 401 to 439 form a coiled coil; the sequence is KRLQEKQKSERETAVRISQEIGNLMKEIETLVEEKTKES. 2 N-linked (GlcNAc...) asparagine glycosylation sites follow: N467 and N540. One can recognise a Fe2OG dioxygenase domain in the interval 564–678; sequence SHLVCRTAIE…RCAIALWFTL (115 aa). H587, D589, and H659 together coordinate Fe cation. Residue R669 is part of the active site. The disordered stretch occupies residues 699-736; sequence SPEEMDLSQEQPLDAQQGPPEPAQESLSGSESKPKDEL. A Prevents secretion from ER motif is present at residues 733-736; sequence KDEL.

It belongs to the leprecan family. It depends on Fe cation as a cofactor. L-ascorbate is required as a cofactor. Post-translationally, O-glycosylated; chondroitin sulfate.

Its subcellular location is the endoplasmic reticulum. The protein resides in the secreted. It localises to the extracellular space. The protein localises to the extracellular matrix. It carries out the reaction L-prolyl-[collagen] + 2-oxoglutarate + O2 = trans-3-hydroxy-L-prolyl-[collagen] + succinate + CO2. Its function is as follows. Basement membrane-associated chondroitin sulfate proteoglycan (CSPG). Has prolyl 3-hydroxylase activity catalyzing the post-translational formation of 3-hydroxyproline in -Xaa-Pro-Gly- sequences in collagens, especially types IV and V. May be involved in the secretory pathway of cells. Has growth suppressive activity in fibroblasts. The sequence is that of Prolyl 3-hydroxylase 1 from Homo sapiens (Human).